Here is a 367-residue protein sequence, read N- to C-terminus: Leucine-rich repeat-containing protein 28 (367 aa).

9 LRR repeats span residues 16 to 36 (KHKN…ELLK), 42 to 63 (HLER…LAQK), 66 to 87 (NLVE…IGSL), 89 to 111 (KLQC…GGLR), 112 to 133 (ALRH…VGDL), 135 to 156 (ELQT…LHLC), 158 to 180 (SLQY…CQLP), 181 to 202 (SLNE…LGRS), and 204 to 226 (ELQY…LYNK).

In Mus musculus (Mouse), this protein is Leucine-rich repeat-containing protein 28 (Lrrc28).